The sequence spans 418 residues: Gamma-glutamyl phosphate reductase (418 aa).

Belongs to the gamma-glutamyl phosphate reductase family.

It localises to the cytoplasm. It carries out the reaction L-glutamate 5-semialdehyde + phosphate + NADP(+) = L-glutamyl 5-phosphate + NADPH + H(+). The protein operates within amino-acid biosynthesis; L-proline biosynthesis; L-glutamate 5-semialdehyde from L-glutamate: step 2/2. Catalyzes the NADPH-dependent reduction of L-glutamate 5-phosphate into L-glutamate 5-semialdehyde and phosphate. The product spontaneously undergoes cyclization to form 1-pyrroline-5-carboxylate. This chain is Gamma-glutamyl phosphate reductase, found in Lacticaseibacillus paracasei (strain ATCC 334 / BCRC 17002 / CCUG 31169 / CIP 107868 / KCTC 3260 / NRRL B-441) (Lactobacillus paracasei).